The primary structure comprises 433 residues: 23S rRNA (uracil(1939)-C(5))-methyltransferase RlmD (433 aa).

A TRAM domain is found at 10–68; it reads RTTTRQIITVSVNDLDSFGQGVARHNGKTLFIPGLLPQENAEVAVTEDKKQYARAKVVR. [4Fe-4S] cluster-binding residues include C81, C87, C90, and C162. Residues Q265, F294, N299, E315, N342, and D363 each contribute to the S-adenosyl-L-methionine site. The active-site Nucleophile is C389.

It belongs to the class I-like SAM-binding methyltransferase superfamily. RNA M5U methyltransferase family. RlmD subfamily.

The enzyme catalyses uridine(1939) in 23S rRNA + S-adenosyl-L-methionine = 5-methyluridine(1939) in 23S rRNA + S-adenosyl-L-homocysteine + H(+). Catalyzes the formation of 5-methyl-uridine at position 1939 (m5U1939) in 23S rRNA. The protein is 23S rRNA (uracil(1939)-C(5))-methyltransferase RlmD of Shigella flexneri.